A 133-amino-acid chain; its full sequence is Small ribosomal subunit protein uS8 (133 aa).

Belongs to the universal ribosomal protein uS8 family. Part of the 30S ribosomal subunit. Contacts proteins S5 and S12.

Functionally, one of the primary rRNA binding proteins, it binds directly to 16S rRNA central domain where it helps coordinate assembly of the platform of the 30S subunit. In Salinibacter ruber (strain DSM 13855 / M31), this protein is Small ribosomal subunit protein uS8.